The primary structure comprises 341 residues: Ketol-acid reductoisomerase (NADP(+)) (341 aa).

One can recognise a KARI N-terminal Rossmann domain in the interval 1–182 (MATIYYDKDA…GCTRAGVLET (182 aa)). Residues 25–28 (YGSQ), serine 51, serine 53, and 83–86 (DQTQ) contribute to the NADP(+) site. The active site involves histidine 108. Glycine 134 is an NADP(+) binding site. Residues 183-328 (TFKEETETDL…KRLRDMMSWI (146 aa)) form the KARI C-terminal knotted domain. 4 residues coordinate Mg(2+): aspartate 191, glutamate 195, glutamate 227, and glutamate 231. Substrate is bound at residue serine 252.

Belongs to the ketol-acid reductoisomerase family. The cofactor is Mg(2+).

It catalyses the reaction (2R)-2,3-dihydroxy-3-methylbutanoate + NADP(+) = (2S)-2-acetolactate + NADPH + H(+). The catalysed reaction is (2R,3R)-2,3-dihydroxy-3-methylpentanoate + NADP(+) = (S)-2-ethyl-2-hydroxy-3-oxobutanoate + NADPH + H(+). It functions in the pathway amino-acid biosynthesis; L-isoleucine biosynthesis; L-isoleucine from 2-oxobutanoate: step 2/4. The protein operates within amino-acid biosynthesis; L-valine biosynthesis; L-valine from pyruvate: step 2/4. Functionally, involved in the biosynthesis of branched-chain amino acids (BCAA). Catalyzes an alkyl-migration followed by a ketol-acid reduction of (S)-2-acetolactate (S2AL) to yield (R)-2,3-dihydroxy-isovalerate. In the isomerase reaction, S2AL is rearranged via a Mg-dependent methyl migration to produce 3-hydroxy-3-methyl-2-ketobutyrate (HMKB). In the reductase reaction, this 2-ketoacid undergoes a metal-dependent reduction by NADPH to yield (R)-2,3-dihydroxy-isovalerate. The protein is Ketol-acid reductoisomerase (NADP(+)) of Anaeromyxobacter dehalogenans (strain 2CP-C).